Here is a 340-residue protein sequence, read N- to C-terminus: Heat-inducible transcription repressor HrcA (340 aa).

Belongs to the HrcA family.

Negative regulator of class I heat shock genes (grpE-dnaK-dnaJ and groELS operons). Prevents heat-shock induction of these operons. The chain is Heat-inducible transcription repressor HrcA from Mycoplasmopsis synoviae (strain 53) (Mycoplasma synoviae).